A 717-amino-acid chain; its full sequence is Fatty acid oxidation complex subunit alpha (717 aa).

Positions 1-189 (MIYQSPTIEV…KVGAIDAVVA (189 aa)) are enoyl-CoA hydratase/isomerase. Substrate is bound at residue D296. The 3-hydroxyacyl-CoA dehydrogenase stretch occupies residues 311–717 (KKVNSAAVLG…ANNGSYYQQA (407 aa)). NAD(+)-binding positions include M324, D343, 400–402 (VVE), K407, and S429. H450 functions as the For 3-hydroxyacyl-CoA dehydrogenase activity in the catalytic mechanism. N453 serves as a coordination point for NAD(+). Residues N500 and Y660 each contribute to the substrate site.

It in the N-terminal section; belongs to the enoyl-CoA hydratase/isomerase family. In the C-terminal section; belongs to the 3-hydroxyacyl-CoA dehydrogenase family. In terms of assembly, heterotetramer of two alpha chains (FadB) and two beta chains (FadA).

The catalysed reaction is a (3S)-3-hydroxyacyl-CoA + NAD(+) = a 3-oxoacyl-CoA + NADH + H(+). It carries out the reaction a (3S)-3-hydroxyacyl-CoA = a (2E)-enoyl-CoA + H2O. The enzyme catalyses a 4-saturated-(3S)-3-hydroxyacyl-CoA = a (3E)-enoyl-CoA + H2O. It catalyses the reaction (3S)-3-hydroxybutanoyl-CoA = (3R)-3-hydroxybutanoyl-CoA. The catalysed reaction is a (3Z)-enoyl-CoA = a 4-saturated (2E)-enoyl-CoA. It carries out the reaction a (3E)-enoyl-CoA = a 4-saturated (2E)-enoyl-CoA. It functions in the pathway lipid metabolism; fatty acid beta-oxidation. Its function is as follows. Involved in the aerobic and anaerobic degradation of long-chain fatty acids via beta-oxidation cycle. Catalyzes the formation of 3-oxoacyl-CoA from enoyl-CoA via L-3-hydroxyacyl-CoA. It can also use D-3-hydroxyacyl-CoA and cis-3-enoyl-CoA as substrate. This is Fatty acid oxidation complex subunit alpha from Shewanella pealeana (strain ATCC 700345 / ANG-SQ1).